We begin with the raw amino-acid sequence, 183 residues long: Ribosome rescue factor SmrB (183 aa).

The 76-residue stretch at 98 to 173 folds into the Smr domain; the sequence is LDLHGLTQLQ…GDAALLVLIE (76 aa).

This sequence belongs to the SmrB family. As to quaternary structure, associates with collided ribosomes, but not with correctly translating polysomes.

Its function is as follows. Acts as a ribosome collision sensor. Detects stalled/collided disomes (pairs of ribosomes where the leading ribosome is stalled and a second ribosome has collided with it) and endonucleolytically cleaves mRNA at the 5' boundary of the stalled ribosome. Stalled/collided disomes form a new interface (primarily via the 30S subunits) that binds SmrB. Cleaved mRNA becomes available for tmRNA ligation, leading to ribosomal subunit dissociation and rescue of stalled ribosomes. The protein is Ribosome rescue factor SmrB of Escherichia coli O7:K1 (strain IAI39 / ExPEC).